Reading from the N-terminus, the 822-residue chain is IQ and AAA domain-containing protein 1-like (822 aa).

In terms of domain architecture, IQ spans glutamine 206–glutamate 235. Residues arginine 338–lysine 363 show a composition bias toward basic and acidic residues. 2 disordered regions span residues arginine 338–lysine 378 and arginine 457–threonine 484. The span at lysine 464–lysine 479 shows a compositional bias: basic residues. Residue glycine 569–lysine 576 coordinates ATP.

This sequence belongs to the AAA ATPase family.

This is IQ and AAA domain-containing protein 1-like (Iqca1l) from Rattus norvegicus (Rat).